The sequence spans 128 residues: Aspartate 1-decarboxylase (128 aa).

The Schiff-base intermediate with substrate; via pyruvic acid role is filled by Ser-25. Ser-25 is subject to Pyruvic acid (Ser). Substrate is bound at residue Thr-57. The active-site Proton donor is the Tyr-58. Position 73-75 (73-75) interacts with substrate; sequence GSA.

Belongs to the PanD family. In terms of assembly, heterooctamer of four alpha and four beta subunits. It depends on pyruvate as a cofactor. Post-translationally, is synthesized initially as an inactive proenzyme, which is activated by self-cleavage at a specific serine bond to produce a beta-subunit with a hydroxyl group at its C-terminus and an alpha-subunit with a pyruvoyl group at its N-terminus.

The protein resides in the cytoplasm. It catalyses the reaction L-aspartate + H(+) = beta-alanine + CO2. It functions in the pathway cofactor biosynthesis; (R)-pantothenate biosynthesis; beta-alanine from L-aspartate: step 1/1. Its function is as follows. Catalyzes the pyruvoyl-dependent decarboxylation of aspartate to produce beta-alanine. The polypeptide is Aspartate 1-decarboxylase (Burkholderia mallei (strain NCTC 10247)).